We begin with the raw amino-acid sequence, 535 residues long: Mannan polymerase I complex VAN1 subunit (535 aa).

At methionine 1–valine 64 the chain is on the cytoplasmic side. The interval leucine 22–lysine 48 is disordered. Serine 25 bears the Phosphoserine mark. The helical; Signal-anchor for type II membrane protein transmembrane segment at serine 65–isoleucine 81 threads the bilayer. The Lumenal portion of the chain corresponds to serine 82 to glutamate 535. N-linked (GlcNAc...) asparagine glycans are attached at residues asparagine 215 and asparagine 251.

It belongs to the ANP1/MMN9/VAN1 family. In terms of assembly, component of the M-Pol I complex which contains MNN9 and VAN1. Glycosylated.

It localises to the endoplasmic reticulum membrane. It is found in the golgi apparatus membrane. Functionally, involved in regulation of the phosphorylation of a number of proteins, some of which appear to be important in cell growth control. Its function is as follows. The M-Pol I complex possesses alpha-1,6-mannosyltransferase activity and is probably involved in the elongation of the mannan backbone of N-linked glycans on cell wall and periplasmic proteins. This is Mannan polymerase I complex VAN1 subunit (VAN1) from Saccharomyces cerevisiae (strain ATCC 204508 / S288c) (Baker's yeast).